The sequence spans 314 residues: Altered inheritance of mitochondria protein 6 homolog ARB_06966 (314 aa).

The N-terminal stretch at 1–21 (MKSSILASAAILAASLEPVAA) is a signal peptide. N-linked (GlcNAc...) asparagine glycosylation is found at asparagine 91 and asparagine 184.

This sequence belongs to the AIM6 family.

The protein localises to the secreted. This chain is Altered inheritance of mitochondria protein 6 homolog ARB_06966, found in Arthroderma benhamiae (strain ATCC MYA-4681 / CBS 112371) (Trichophyton mentagrophytes).